An 81-amino-acid chain; its full sequence is Adenoregulin-related peptide (81 aa).

Positions 1 to 22 (MAFLKKSLLLVLFLGLVSLSIC) are cleaved as a signal peptide. Positions 23–43 (EEEKRENEDEEEQEDDEQSEM) are excised as a propeptide. The interval 24–46 (EEKRENEDEEEQEDDEQSEMKRG) is disordered. Residues 30–40 (EDEEEQEDDEQ) are compositionally biased toward acidic residues. At Ile78 the chain carries Isoleucine amide. The propeptide occupies 79 to 81 (GEQ).

In terms of tissue distribution, expressed by the skin glands.

The protein resides in the secreted. Its function is as follows. Has antibacterial activity against Gram-positive bacterium M.luteus NCT C2665 and against Gram-negative bacterium E.coli K12D31. The sequence is that of Adenoregulin-related peptide from Agalychnis callidryas (Red-eyed tree frog).